We begin with the raw amino-acid sequence, 473 residues long: Arginine biosynthesis bifunctional protein ArgJ, mitochondrial (473 aa).

Thr201, Lys230, Thr241, Glu328, Asn468, and Thr473 together coordinate substrate. Thr241 acts as the Nucleophile in catalysis.

It belongs to the ArgJ family. Heterodimer of an alpha and a beta chain. In terms of processing, the alpha and beta chains are autoproteolytically processed from a single precursor protein within the mitochondrion.

It localises to the mitochondrion matrix. The enzyme catalyses N(2)-acetyl-L-ornithine + L-glutamate = N-acetyl-L-glutamate + L-ornithine. It carries out the reaction L-glutamate + acetyl-CoA = N-acetyl-L-glutamate + CoA + H(+). It functions in the pathway amino-acid biosynthesis; L-arginine biosynthesis; L-ornithine and N-acetyl-L-glutamate from L-glutamate and N(2)-acetyl-L-ornithine (cyclic): step 1/1. The protein operates within amino-acid biosynthesis; L-arginine biosynthesis; N(2)-acetyl-L-ornithine from L-glutamate: step 1/4. Catalyzes two activities which are involved in the cyclic version of arginine biosynthesis: the synthesis of acetylglutamate from glutamate and acetyl-CoA, and of ornithine by transacetylation between acetylornithine and glutamate. This Ajellomyces capsulatus (strain G186AR / H82 / ATCC MYA-2454 / RMSCC 2432) (Darling's disease fungus) protein is Arginine biosynthesis bifunctional protein ArgJ, mitochondrial.